The primary structure comprises 816 residues: Oxysterol-binding protein-related protein 1D (816 aa).

The region spanning 92 to 229 is the PH domain; it reads GAGVAGIMYK…WVEAFQVAKD (138 aa). The stretch at 290 to 321 forms a coiled coil; it reads KHIILLDTLRQLETEKIELEATVVDETKEHDS. The tract at residues 340–362 is disordered; it reads SASDSEADNESQDGADVESDEDD. The segment covering 344 to 362 has biased composition (acidic residues); that stretch reads SEADNESQDGADVESDEDD. Residues 735–764 are a coiled coil; the sequence is NGEYESANAEKLRLEQLQRQARRLQEKGWK.

Belongs to the OSBP family. As to expression, expressed in roots, leaves, stems and flowers.

In terms of biological role, may be involved in the transport of sterols. The polypeptide is Oxysterol-binding protein-related protein 1D (ORP1D) (Arabidopsis thaliana (Mouse-ear cress)).